A 383-amino-acid polypeptide reads, in one-letter code: Schlafen-like protein 3 (383 aa).

Residues Phe118–Gly266 form an SLFN-like fold region. Residues Leu354 to Tyr374 traverse the membrane as a helical segment.

This sequence belongs to the Schlafen family. In terms of assembly, component of the PUCH (precursor of 21U RNA 5'-end cleavage holoenzyme) complex; consisting of tofu-1, tofu-2 and either slfl-3 or slfl-4. Within the complex, interacts (via N-terminus) with tofu-2 (via N-terminus); the presence of tofu-1 is required for the interaction.

The protein localises to the mitochondrion membrane. In terms of biological role, component of the trimeric PUCH (precursor of 21U RNA 5'-end cleavage holoenzyme) complex, that acts as an endoribonuclease processing the 5'-end of precursor Piwi-interacting RNAs (piRNAs). The PUCH complex consists of tofu-1, tofu-2 and either slfl-3 or slfl-4, where tofu-2 exhibits endoribonuclease activity. PUCH-mediated processing strictly requires a 7-methyl-G cap (m7 G-cap) and an uracil at position three (U3). PUCH also exhibits a strict bias for piRNA precursors with an A or G at position 1. Mature piRNA production is enhanced by the interaction of PUCH with the PETISCO complex, which is stabilizing piRNA precursors and allows their processing by PUCH. In Caenorhabditis elegans, this protein is Schlafen-like protein 3.